A 306-amino-acid polypeptide reads, in one-letter code: MNPSPPSAAATPSSARAPSRFSQFYALTKPRVVQLIVFCALIGMVLAVPGVPTWLDVRLALIACAGIWLVAGAAAAFNCLVEQQIDAKMRRTAWRPTARGQLSNPLTLAFSAGLCALGSWVLYVWVNPLTMWLTFATFVGYAVVYTVILKPLTPQNIVIGGASGAMPPVLGWAAMTGSVGPEALILFLIIFLWTPPHFWALALYRVEDYRKAGLPMLPVTHGNEFTRLQVFLYTLVLFPACLMPFIFKMSGWLYLVAAVLLSIGFSGHAWCLWRNYSDALARKTFRFSLIHLSALFAALLLDHYLI.

A run of 9 helical transmembrane segments spans residues 35–55, 61–81, 106–126, 129–149, 157–177, 183–203, 224–244, 245–265, and 286–306; these read LIVF…PTWL, LIAC…NCLV, LTLA…YVWV, LTMW…TVIL, IVIG…AMTG, ALIL…ALAL, EFTR…CLMP, FIFK…SIGF, and RFSL…HYLI.

This sequence belongs to the UbiA prenyltransferase family. Protoheme IX farnesyltransferase subfamily.

The protein localises to the cell inner membrane. It carries out the reaction heme b + (2E,6E)-farnesyl diphosphate + H2O = Fe(II)-heme o + diphosphate. Its pathway is porphyrin-containing compound metabolism; heme O biosynthesis; heme O from protoheme: step 1/1. Its function is as follows. Converts heme B (protoheme IX) to heme O by substitution of the vinyl group on carbon 2 of heme B porphyrin ring with a hydroxyethyl farnesyl side group. The sequence is that of Protoheme IX farnesyltransferase from Polaromonas naphthalenivorans (strain CJ2).